The chain runs to 208 residues: MIRRLLGVALLTGAITGCTTIQLEPLPEGMTNQPPADWAERSDHLSRFDQWQLRGKLAVKQPSDSGTAIINGWRQQGERYDLSLSSSFLGMGTTRLTGVPGFIELTLANGETYQSSDPETLVAAATGWNLPIDNLAWWVRGLPAPEGDFRLLFDEQHQLAILRQDGWEIRYDRWQPFIDSLPALPARITALNGDKRVRVVISEWQQED.

Residues 1–17 (MIRRLLGVALLTGAITG) form the signal peptide. Residue Cys18 is the site of N-palmitoyl cysteine attachment. The S-diacylglycerol cysteine moiety is linked to residue Cys18.

The protein belongs to the LolB family. In terms of assembly, monomer.

It localises to the cell outer membrane. Its function is as follows. Plays a critical role in the incorporation of lipoproteins in the outer membrane after they are released by the LolA protein. The chain is Outer-membrane lipoprotein LolB from Marinobacter nauticus (strain ATCC 700491 / DSM 11845 / VT8) (Marinobacter aquaeolei).